The sequence spans 439 residues: Trigger factor (439 aa).

One can recognise a PPIase FKBP-type domain in the interval 175 to 260; the sequence is GDRVTISYRS…VERLSVKDEI (86 aa).

The protein belongs to the FKBP-type PPIase family. Tig subfamily.

The protein localises to the cytoplasm. The catalysed reaction is [protein]-peptidylproline (omega=180) = [protein]-peptidylproline (omega=0). In terms of biological role, involved in protein export. Acts as a chaperone by maintaining the newly synthesized protein in an open conformation. Functions as a peptidyl-prolyl cis-trans isomerase. This Anaplasma phagocytophilum (strain HZ) protein is Trigger factor.